Here is a 91-residue protein sequence, read N- to C-terminus: UPF0512 protein M (91 aa).

This sequence belongs to the UPF0512 family.

The sequence is that of UPF0512 protein M from Dictyostelium discoideum (Social amoeba).